The following is a 149-amino-acid chain: Azurin (149 aa).

The first 20 residues, 1-20, serve as a signal peptide directing secretion; it reads MLAKATLAIVLSAASLPVLA. The region spanning 21-149 is the Plastocyanin-like domain; the sequence is AQCEATIESN…MMKGTLKLSN (129 aa). Residues Cys23 and Cys46 are joined by a disulfide bond. His66, Cys132, His137, and Met141 together coordinate Cu cation.

The protein resides in the periplasm. Transfers electrons from cytochrome c551 to cytochrome oxidase. This Achromobacter denitrificans (Alcaligenes denitrificans) protein is Azurin (azu).